The following is a 126-amino-acid chain: Hydrogenase maturation factor HypA (126 aa).

Histidine 2 is a binding site for Ni(2+). 4 residues coordinate Zn(2+): cysteine 78, cysteine 81, cysteine 97, and cysteine 100.

The protein belongs to the HypA/HybF family.

Functionally, involved in the maturation of [NiFe] hydrogenases. Required for nickel insertion into the metal center of the hydrogenase. The polypeptide is Hydrogenase maturation factor HypA (Methanococcus maripaludis (strain C6 / ATCC BAA-1332)).